The primary structure comprises 349 residues: Protein arginine N-methyltransferase 6 (349 aa).

Positions 17–324 (DYMYFDSYSD…EENSRHICIR (308 aa)) constitute an SAM-dependent MTase PRMT-type domain. S-adenosyl-L-methionine-binding residues include H30, R39, G63, E85, and E114. Residues E128 and E137 contribute to the active site.

It belongs to the class I-like SAM-binding methyltransferase superfamily. Protein arginine N-methyltransferase family. PRMT6 subfamily.

The protein localises to the nucleus. It catalyses the reaction L-arginyl-[protein] + 2 S-adenosyl-L-methionine = N(omega),N(omega)-dimethyl-L-arginyl-[protein] + 2 S-adenosyl-L-homocysteine + 2 H(+). Arginine methyltransferase that can catalyze the formation of both omega-N monomethylarginine (MMA) and asymmetrical dimethylarginine (aDMA), with a strong preference for the formation of aDMA. Preferentially methylates arginyl residues present in a glycine and arginine-rich domain and displays preference for monomethylated substrates. Specifically mediates the asymmetric dimethylation of histone H3 'Arg-2' to form H3R2me2a. H3R2me2a represents a specific tag for epigenetic transcriptional repression and is mutually exclusive with methylation on histone H3 'Lys-4' (H3K4me2 and H3K4me3). Acts as a transcriptional repressor of various genes such as HOXA2, THBS1 and TP53. Repression of TP53 blocks cellular senescence. Also methylates histone H2A and H4 'Arg-3' (H2AR3me and H4R3me, respectively). Acts as a regulator of DNA base excision during DNA repair by mediating the methylation of DNA polymerase beta (POLB), leading to the stimulation of its polymerase activity by enhancing DNA binding and processivity. Methylates HMGA1. Regulates alternative splicing events. Acts as a transcriptional coactivator of a number of steroid hormone receptors including ESR1, ESR2, PGR and NR3C1. The polypeptide is Protein arginine N-methyltransferase 6 (prmt6) (Danio rerio (Zebrafish)).